A 358-amino-acid polypeptide reads, in one-letter code: Leukotriene B4 receptor 2 (358 aa).

Residues 1–24 lie on the Extracellular side of the membrane; the sequence is MSVCYRPPGNETLLSWKGSRATGT. N-linked (GlcNAc...) asparagine glycosylation is present at asparagine 10. A helical transmembrane segment spans residues 25-45; it reads AFLLLAALLGLPGNGFVVWSL. Residues 46 to 60 lie on the Cytoplasmic side of the membrane; sequence AGWRPTAGRPLAATL. A helical transmembrane segment spans residues 61 to 81; that stretch reads VLHLALADGAVLLLTPLFVAF. At 82–96 the chain is on the extracellular side; sequence LSRQAWPLGQVGCKA. Residues 97–117 traverse the membrane as a helical segment; sequence VYYVCALSMYASVLLTGLLSL. At 118–140 the chain is on the cytoplasmic side; sequence QRCLAVTRPFLAPRLRSPALARR. Residues 141–161 form a helical membrane-spanning segment; sequence LLLGVWLAALVLAVPAAVYRH. The Extracellular segment spans residues 162-185; sequence LWGDRVCQLCHPSAVHAAAHLSLE. A helical transmembrane segment spans residues 186 to 206; the sequence is TLTAFVLPFGTVLGCYGVTLA. Topologically, residues 207–225 are cytoplasmic; that stretch reads RLRGARWGSGRQGTRVGRL. Residues 226 to 246 form a helical membrane-spanning segment; sequence VSAIVLAFGLLWAPYHAVNLL. Residues 247–275 lie on the Extracellular side of the membrane; the sequence is QAVAALAPPEGPLARLGGAGQAARAGTTA. Residues 276–296 traverse the membrane as a helical segment; it reads LAFFSSSVNPVLYVFTAGDLL. Over 297-358 the chain is Cytoplasmic; sequence PRAGPRFLTR…GRMEKDSQEW (62 aa). Residues 315 to 358 are disordered; it reads RVGSRSREGTMELRTTPRLKVVGQGRGYGDPGGGGRMEKDSQEW. Gly residues predominate over residues 338 to 349; it reads QGRGYGDPGGGG.

It belongs to the G-protein coupled receptor 1 family.

It is found in the cell membrane. Functionally, low-affinity receptor for leukotrienes including leukotriene B4. Mediates chemotaxis of granulocytes and macrophages. The response is mediated via G-proteins that activate a phosphatidylinositol-calcium second messenger system. The chain is Leukotriene B4 receptor 2 (Ltb4r2) from Rattus norvegicus (Rat).